The sequence spans 472 residues: FAD-dependent monooxygenase ltmM (472 aa).

The helical transmembrane segment at 7 to 27 threads the bilayer; that stretch reads VIIVGGSVAGLSLAHCLEKIG. The FAD site is built by E34, G48, and R107. Residue N186 is glycosylated (N-linked (GlcNAc...) asparagine). FAD contacts are provided by D306 and A319. Residues 450–470 traverse the membrane as a helical segment; sequence IVYALYLVAAAAFILYCLSSL.

It belongs to the paxM FAD-dependent monooxygenase family. FAD serves as cofactor.

The protein resides in the membrane. Its pathway is secondary metabolite biosynthesis. In terms of biological role, FAD-dependent monooxygenase; part of the gene cluster that mediates the biosynthesis of lolitrems, indole-diterpene mycotoxins that are potent tremorgens in mammals, and are synthesized by clavicipitaceous fungal endophytes in association with their grass hosts. The geranylgeranyl diphosphate (GGPP) synthase ltmG is proposed to catalyze the first step in lolitremB biosynthesis. LtmG catalyzes a series of iterative condensations of isopentenyl diphosphate (IPP) with dimethylallyl diphosphate (DMAPP), geranyl diphosphate (GPP), and farnesyl diphosphate (FPP), to form GGPP. GGPP then condenses with indole-3-glycerol phosphate to form 3-geranylgeranylindole, an acyclic intermediate, to be incorporated into paxilline. Either ltmG or ltmC could be responsible for this step, as both are putative prenyl transferases. The FAD-dependent monooxygenase ltmM then catalyzes the epoxidation of the two terminal alkenes of the geranylgeranyl moiety, which is subsequently cyclized by ltmB, to paspaline. The cytochrome P450 monooxygenases ltmQ and ltmP can sequentially oxidize paspaline to terpendole E and terpendole F. Alternatively, ltmP converts paspaline to an intermediate which is oxidized by ltmQ to terpendole F. LtmF, ltmK, ltmE and ltmJ appear to be unique to the epichloe endophytes. The prenyltransferase ltmF is involved in the 27-hydroxyl-O-prenylation. The cytochrome P450 monooxygenase ltmK is required for the oxidative acetal ring formation. The multi-functional prenyltransferase ltmE is required for C20- and C21-prenylations of the indole ring of paspalanes and acts together with the cytochrome P450 monooxygenase ltmJ to yield lolitremanes by multiple oxidations and ring closures. The stereoisomer pairs of lolitriol and lolitrem N or lolitrem B and lolitrem F may be attributed to variations in the way in which ring closure can occur under the action of ltmJ. While the major product of this pathway is lolitrem B, the prenyl transferases and cytochrome P450 monooxygenases identified in this pathway have a remarkable versatility in their regio- and stereo-specificities to generate a diverse range of metabolites that are products of a metabolic grid rather than a linear pathway. The chain is FAD-dependent monooxygenase ltmM (ltmM) from Epichloe festucae var. lolii (Neotyphodium lolii).